A 132-amino-acid polypeptide reads, in one-letter code: Large ribosomal subunit protein uL14 (132 aa).

This sequence belongs to the universal ribosomal protein uL14 family. As to quaternary structure, part of the 50S ribosomal subunit. Forms a cluster with proteins L3 and L24e, part of which may contact the 16S rRNA in 2 intersubunit bridges.

Binds to 23S rRNA. Forms part of two intersubunit bridges in the 70S ribosome. This chain is Large ribosomal subunit protein uL14, found in Thermoplasma volcanium (strain ATCC 51530 / DSM 4299 / JCM 9571 / NBRC 15438 / GSS1).